Reading from the N-terminus, the 108-residue chain is Kanamycin resistance protein (108 aa).

The region spanning 1–99 is the N-acetyltransferase domain; that stretch reads SRTLLLERGR…PAVYMVQTRQ (99 aa).

The protein is Kanamycin resistance protein of Rhizobium radiobacter (Agrobacterium tumefaciens).